Consider the following 311-residue polypeptide: Pyrimidine-specific ribonucleoside hydrolase RihA (311 aa).

Histidine 240 is a catalytic residue.

The protein belongs to the IUNH family. RihA subfamily.

Functionally, hydrolyzes with equal efficiency cytidine or uridine to ribose and cytosine or uracil, respectively. The sequence is that of Pyrimidine-specific ribonucleoside hydrolase RihA from Escherichia coli O45:K1 (strain S88 / ExPEC).